Reading from the N-terminus, the 128-residue chain is Cytochrome c-type biogenesis protein CcmE (128 aa).

At 1-8 (MQKRVRNR) the chain is on the cytoplasmic side. The helical; Signal-anchor for type II membrane protein transmembrane segment at 9–29 (LITIIICFCSAFLGISIILYN) threads the bilayer. Over 30–128 (LEKNIVFFLP…KHDENYRPPQ (99 aa)) the chain is Periplasmic. Heme-binding residues include histidine 120 and tyrosine 124.

The protein belongs to the CcmE/CycJ family.

The protein resides in the cell inner membrane. In terms of biological role, heme chaperone required for the biogenesis of c-type cytochromes. Transiently binds heme delivered by CcmC and transfers the heme to apo-cytochromes in a process facilitated by CcmF and CcmH. The polypeptide is Cytochrome c-type biogenesis protein CcmE (Rickettsia rickettsii (strain Iowa)).